We begin with the raw amino-acid sequence, 264 residues long: Sec-independent protein translocase protein TatC (264 aa).

The next 6 membrane-spanning stretches (helical) occupy residues 20–40 (VVVI…EPAE), 85–105 (FFAQ…PVAV), 131–151 (AVGL…PYIL), 175–195 (FVLQ…VMFA), 211–231 (IRYA…DGSG), and 232–252 (VTMW…MFFA).

It belongs to the TatC family. In terms of assembly, forms a complex with TatA.

The protein localises to the cell membrane. Part of the twin-arginine translocation (Tat) system that transports large folded proteins containing a characteristic twin-arginine motif in their signal peptide across membranes. The chain is Sec-independent protein translocase protein TatC from Cenarchaeum symbiosum (strain A).